Here is a 316-residue protein sequence, read N- to C-terminus: UDP-N-acetylenolpyruvoylglucosamine reductase (316 aa).

The 165-residue stretch at 30–194 folds into the FAD-binding PCMH-type domain; that stretch reads VGGEADYLVF…LSVKFALAPG (165 aa). The active site involves arginine 173. Serine 223 acts as the Proton donor in catalysis. Glutamate 293 is an active-site residue.

It belongs to the MurB family. The cofactor is FAD.

The protein localises to the cytoplasm. It carries out the reaction UDP-N-acetyl-alpha-D-muramate + NADP(+) = UDP-N-acetyl-3-O-(1-carboxyvinyl)-alpha-D-glucosamine + NADPH + H(+). It functions in the pathway cell wall biogenesis; peptidoglycan biosynthesis. Its function is as follows. Cell wall formation. The sequence is that of UDP-N-acetylenolpyruvoylglucosamine reductase from Streptococcus pneumoniae serotype 19F (strain G54).